Here is a 173-residue protein sequence, read N- to C-terminus: Fimbrial protein PrsE (173 aa).

The signal sequence occupies residues 1 to 24 (MKKIRGLCLPVMLGAVLMSQHVHA).

The protein localises to the secreted. The protein resides in the fimbrium. Functionally, fimbriae (also called pili), polar filaments radiating from the surface of the bacterium to a length of 0.5-1.5 micrometers and numbering 100-300 per cell, enable bacteria to colonize the epithelium of specific host organs. This Escherichia coli protein is Fimbrial protein PrsE (prsE).